The primary structure comprises 37 residues: Large ribosomal subunit protein bL36c (37 aa).

The protein belongs to the bacterial ribosomal protein bL36 family.

Its subcellular location is the plastid. The protein is Large ribosomal subunit protein bL36c (rpl36) of Euglena longa (Euglenophycean alga).